A 686-amino-acid chain; its full sequence is Potassium-transporting ATPase ATP-binding subunit (686 aa).

The next 2 membrane-spanning stretches (helical) occupy residues 38-58 (VMFV…KDLV) and 64-84 (AAPL…VLFA). The tract at residues 101-123 (ALRKMRKETTARRWKDGREERVP) is disordered. Over residues 107–123 (KETTARRWKDGREERVP) the composition is skewed to basic and acidic residues. The next 2 helical transmembrane spans lie at 224–244 (ILLV…VPLA) and 257–277 (VALL…AIGI). The active-site 4-aspartylphosphate intermediate is the aspartate 308. ATP contacts are provided by residues aspartate 345, glutamate 349, 378-385 (FTAQTRMS), and lysine 399. 2 residues coordinate Mg(2+): aspartate 522 and aspartate 526. Transmembrane regions (helical) follow at residues 592–612 (FAIL…LNVM), 620–640 (AVLS…PLAL), and 666–686 (VIVP…VGLA).

Belongs to the cation transport ATPase (P-type) (TC 3.A.3) family. Type IA subfamily. The system is composed of three essential subunits: KdpA, KdpB and KdpC.

It is found in the cell membrane. The catalysed reaction is K(+)(out) + ATP + H2O = K(+)(in) + ADP + phosphate + H(+). Functionally, part of the high-affinity ATP-driven potassium transport (or Kdp) system, which catalyzes the hydrolysis of ATP coupled with the electrogenic transport of potassium into the cytoplasm. This subunit is responsible for energy coupling to the transport system and for the release of the potassium ions to the cytoplasm. This is Potassium-transporting ATPase ATP-binding subunit from Myxococcus xanthus.